The following is a 139-amino-acid chain: Short neuropeptide F (139 aa).

Positions 1-23 (MGRARRTVRAPAQHDALGGHALA) are excised as a propeptide. The segment at 1-48 (MGRARRTVRAPAQHDALGGHALARKSVRSPSRRLRFGRRSDPDMPPQA) is disordered. Residues 22–37 (LARKSVRSPSRRLRFG) are compositionally biased toward basic residues. The residue at position 36 (Phe36) is a Phenylalanine amide. Positions 40–62 (SDPDMPPQAPLDEMNELLSLREV) are excised as a propeptide. At Phe70 the chain carries Phenylalanine amide. Positions 74–96 (SEERAVPHIFPQEFLTQEQDRAV) are excised as a propeptide. Phenylalanine amide is present on Phe105. Positions 109–139 (SDNNMFLLPYESALPQEVKANGSVEDDRQQE) are excised as a propeptide.

Belongs to the NPY family. As to expression, sNPF peptide 1: Expressed in corpora cardiaca (CC), corpora allata (CA), antennal lobe (AL) and gnathal ganglion (GNG) (at protein level). Expression in AL detected in all animals, in GNG in most animals, expression in CC and CA in some animals (at protein level). sNPF peptide 2: Expressed in corpora cardiaca (CC), corpora allata (CA), antennal lobe (AL) and gnathal ganglion (GNG) (at protein level). Expression in AL detected in all animals, in GNG, CC and CA in most animals (at protein level). sNPF peptide 3: Expressed in corpora cardiaca (CC), corpora allata (CA), antennal lobe (AL) and gnathal ganglion (GNG) (at protein level). Expression detected in all animals (at protein level).

It is found in the secreted. Plays a role in controlling food intake and regulating body size. In Agrotis ipsilon (Black cutworm moth), this protein is Short neuropeptide F.